The sequence spans 307 residues: Cytochrome c1 1, heme protein, mitochondrial (307 aa).

The transit peptide at 1-64 directs the protein to the mitochondrion; sequence MVGGGVIQQI…LLSFSTVASA (64 aa). The Mitochondrial intermembrane portion of the chain corresponds to 65–270; it reads DEAEHGLESP…EPEMEERKLM (206 aa). Positions 90–246 constitute a Cytochrome c domain; the sequence is ASIRRGHQVY…YEDGVPATEA (157 aa). 4 residues coordinate heme c: C103, C106, H107, and M226. A helical membrane pass occupies residues 271-288; sequence GFKWIFLLSLALLQAAYY. Residues 289 to 307 lie on the Mitochondrial matrix side of the membrane; that stretch reads RRLKWSVLKSRKLVLDVVN.

Belongs to the cytochrome c family. As to quaternary structure, component of the ubiquinol-cytochrome c oxidoreductase (cytochrome b-c1 complex, complex III, CIII), a multisubunit enzyme composed of 10 subunits. The complex is composed of 3 respiratory subunits cytochrome b (MT-CYB), cytochrome c1 (CYC1-1 or CYC1-2) and Rieske protein (UCR1-1 or UCR1-2), 2 core protein subunits MPPalpha1 (or MPPalpha2) and MPPB, and 5 low-molecular weight protein subunits QCR7-1 (or QCR7-2), UCRQ-1 (or UCRQ-2), QCR9, UCRY and probably QCR6-1 (or QCR6-2). The complex exists as an obligatory dimer and forms supercomplexes (SCs) in the inner mitochondrial membrane with NADH-ubiquinone oxidoreductase (complex I, CI), resulting in different assemblies (supercomplexes SCI(1)III(2) and SCI(2)III(4)). In terms of processing, binds 1 heme c group covalently per subunit.

It is found in the mitochondrion inner membrane. In terms of biological role, component of the ubiquinol-cytochrome c oxidoreductase, a multisubunit transmembrane complex that is part of the mitochondrial electron transport chain which drives oxidative phosphorylation. The respiratory chain contains 3 multisubunit complexes succinate dehydrogenase (complex II, CII), ubiquinol-cytochrome c oxidoreductase (cytochrome b-c1 complex, complex III, CIII) and cytochrome c oxidase (complex IV, CIV), that cooperate to transfer electrons derived from NADH and succinate to molecular oxygen, creating an electrochemical gradient over the inner membrane that drives transmembrane transport and the ATP synthase. The cytochrome b-c1 complex catalyzes electron transfer from ubiquinol to cytochrome c, linking this redox reaction to translocation of protons across the mitochondrial inner membrane, with protons being carried across the membrane as hydrogens on the quinol. In the process called Q cycle, 2 protons are consumed from the matrix, 4 protons are released into the intermembrane space and 2 electrons are passed to cytochrome c. Cytochrome c1 is a catalytic core subunit containing a c-type heme. It transfers electrons from the [2Fe-2S] iron-sulfur cluster of the Rieske protein to cytochrome c. This is Cytochrome c1 1, heme protein, mitochondrial (CYC1-1) from Arabidopsis thaliana (Mouse-ear cress).